Consider the following 203-residue polypeptide: GTP-binding protein ypt1 (203 aa).

GTP-binding positions include 15–23 (GDSGVGKSC), 33–40 (YTESYIST), 63–67 (DTAGQ), 121–124 (NKSD), and 151–153 (SAK). An Effector region motif is present at residues 37–45 (YISTIGVDF). Phosphothreonine is present on T164. S-geranylgeranyl cysteine attachment occurs at residues C202 and C203.

The protein belongs to the small GTPase superfamily. Rab family.

The protein resides in the endoplasmic reticulum membrane. It is found in the golgi apparatus membrane. The protein localises to the cytoplasm. Its subcellular location is the preautophagosomal structure membrane. Its activity is regulated as follows. Rab activation is generally mediated by a guanine exchange factor (GEF), while inactivation through hydrolysis of bound GTP is catalyzed by a GTPase activating protein (GAP). Its function is as follows. The small GTPases Rab are key regulators of intracellular membrane trafficking, from the formation of transport vesicles to their fusion with membranes. Rabs cycle between an inactive GDP-bound form and an active GTP-bound form that is able to recruit to membranes different set of downstream effectors directly responsible for vesicle formation, movement, tethering and fusion. Ypt1 regulates the trafficking of secretory vesicles from the endoplasmic reticulum (ER) to the Golgi. Plays a role in the initial events of the autophagic vacuole development which take place at specialized regions of the endoplasmic reticulum. Also involved in the recycling of membrane proteins. The protein is GTP-binding protein ypt1 (ypt1) of Schizosaccharomyces pombe (strain 972 / ATCC 24843) (Fission yeast).